We begin with the raw amino-acid sequence, 216 residues long: Nicotinamidase (216 aa).

Asp8 is an active-site residue. Zn(2+) contacts are provided by Asp51, His53, and His94. Lys122 is a catalytic residue. The active-site Nucleophile is the Cys167.

Belongs to the isochorismatase family.

The protein localises to the cytoplasm. The protein resides in the nucleus. It localises to the peroxisome. The catalysed reaction is nicotinamide + H2O = nicotinate + NH4(+). It participates in cofactor biosynthesis; nicotinate biosynthesis; nicotinate from nicotinamide: step 1/1. Its activity is regulated as follows. Inhibited by N-ethylmaleimide, HgCl(2) and PCMB. Competitively inhibited by NAD, NMN and 3-acetylpyridine. Its function is as follows. Catalyzes the deamidation of nicotinamide, an early step in the NAD(+) salvage pathway. Positively regulates SIR2-mediated silencing and longevity by preventing the accumulation of intracellular nicotinamide, an inhibitor of SIR2, during times of stress. Also acts on nicotinyl hydroxamate. The protein is Nicotinamidase (PNC1) of Saccharomyces cerevisiae (strain ATCC 204508 / S288c) (Baker's yeast).